Reading from the N-terminus, the 486-residue chain is Small ribosomal subunit protein uS17B (486 aa).

Residues 1–112 (MRDIGINGIK…IENKSNINFV (112 aa)) form a 30S ribosomal protein S17 region. The tract at residues 113–486 (DNLLNVDDKW…ELWTRKNYKS (374 aa)) is unknown.

Belongs to the universal ribosomal protein uS17 family. As to quaternary structure, part of the 30S ribosomal subunit.

Its function is as follows. One of the primary rRNA binding proteins, it binds specifically to the 5'-end of 16S ribosomal RNA. The polypeptide is Small ribosomal subunit protein uS17B (Methanosarcina acetivorans (strain ATCC 35395 / DSM 2834 / JCM 12185 / C2A)).